The chain runs to 134 residues: Putative integral membrane protein YxzK (134 aa).

The next 4 membrane-spanning stretches (helical) occupy residues V3 to I23, I35 to I55, G58 to I78, and L89 to A109.

It is found in the cell membrane. This is Putative integral membrane protein YxzK (yxzK) from Bacillus subtilis (strain 168).